The following is a 422-amino-acid chain: 3-phosphoshikimate 1-carboxyvinyltransferase (422 aa).

3-phosphoshikimate is bound by residues lysine 20, serine 21, and arginine 25. Position 20 (lysine 20) interacts with phosphoenolpyruvate. Positions 91 and 119 each coordinate phosphoenolpyruvate. 3-phosphoshikimate-binding residues include threonine 163, serine 164, glutamine 165, aspartate 305, glutamine 328, and lysine 332. Residue glutamine 165 participates in phosphoenolpyruvate binding. Catalysis depends on aspartate 305, which acts as the Proton acceptor. Residues arginine 336 and arginine 377 each coordinate phosphoenolpyruvate.

The protein belongs to the EPSP synthase family. In terms of assembly, monomer.

The protein resides in the cytoplasm. It carries out the reaction 3-phosphoshikimate + phosphoenolpyruvate = 5-O-(1-carboxyvinyl)-3-phosphoshikimate + phosphate. The protein operates within metabolic intermediate biosynthesis; chorismate biosynthesis; chorismate from D-erythrose 4-phosphate and phosphoenolpyruvate: step 6/7. Functionally, catalyzes the transfer of the enolpyruvyl moiety of phosphoenolpyruvate (PEP) to the 5-hydroxyl of shikimate-3-phosphate (S3P) to produce enolpyruvyl shikimate-3-phosphate and inorganic phosphate. This Ruminiclostridium cellulolyticum (strain ATCC 35319 / DSM 5812 / JCM 6584 / H10) (Clostridium cellulolyticum) protein is 3-phosphoshikimate 1-carboxyvinyltransferase.